The sequence spans 212 residues: High frequency lysogenization protein HflD homolog (212 aa).

The protein belongs to the HflD family.

The protein localises to the cytoplasm. It is found in the cell inner membrane. This is High frequency lysogenization protein HflD homolog from Stutzerimonas stutzeri (strain A1501) (Pseudomonas stutzeri).